The primary structure comprises 144 residues: Large ribosomal subunit protein uL14 (144 aa).

The protein belongs to the universal ribosomal protein uL14 family. As to quaternary structure, part of the 50S ribosomal subunit. Forms a cluster with proteins L3 and L24e, part of which may contact the 16S rRNA in 2 intersubunit bridges.

Binds to 23S rRNA. Forms part of two intersubunit bridges in the 70S ribosome. In Pyrobaculum islandicum (strain DSM 4184 / JCM 9189 / GEO3), this protein is Large ribosomal subunit protein uL14.